The following is a 282-amino-acid chain: Homeobox protein Hox-C12 (282 aa).

Disordered regions lie at residues Tyr-94 to Pro-129 and Gly-147 to Ser-214. Positions Ser-162 to Leu-175 are enriched in low complexity. Residues Ser-214–Leu-273 constitute a DNA-binding region (homeobox).

The protein belongs to the Abd-B homeobox family.

The protein resides in the nucleus. Its function is as follows. Sequence-specific transcription factor which is part of a developmental regulatory system that provides cells with specific positional identities on the anterior-posterior axis. This is Homeobox protein Hox-C12 (HOXC12) from Homo sapiens (Human).